Consider the following 114-residue polypeptide: MTNYHVTLEAAWLVRDVETADDAIGVAISEAGKRLNPKKLDFVEVDVGTTYCPACSEPFGSVFIAANTALVGLVLEMKVFDAESDEHASRIAKSVIGKALTDVPLNVVDVEEFD.

Belongs to the UPF0212 family.

This Methanococcoides burtonii (strain DSM 6242 / NBRC 107633 / OCM 468 / ACE-M) protein is UPF0212 protein Mbur_0968.